The following is an 870-amino-acid chain: Leucine--tRNA ligase (870 aa).

The 'HIGH' region signature appears at 43 to 53 (PYPSGRIHMGH). Positions 630–634 (KMSKS) match the 'KMSKS' region motif. Lysine 633 provides a ligand contact to ATP.

The protein belongs to the class-I aminoacyl-tRNA synthetase family.

It localises to the cytoplasm. It carries out the reaction tRNA(Leu) + L-leucine + ATP = L-leucyl-tRNA(Leu) + AMP + diphosphate. The chain is Leucine--tRNA ligase from Parvibaculum lavamentivorans (strain DS-1 / DSM 13023 / NCIMB 13966).